Consider the following 883-residue polypeptide: Phycobiliprotein ApcE (883 aa).

Cys181 serves as a coordination point for (2R,3E)-phycocyanobilin. 3 consecutive PBS-linker domains span residues 238 to 418 (SLQG…FQKT), 488 to 669 (SARQ…KNEL), and 684 to 861 (RSIQ…KQTK).

Belongs to the phycobilisome linker protein family. Post-translationally, contains one covalently linked bilin chromophore. This protein autochromophorylates (Potential).

It is found in the plastid. The protein resides in the cyanelle thylakoid membrane. This protein is postulated to act both as terminal energy acceptor and as a linker polypeptide that stabilizes the phycobilisome architecture. May have intrinsic bilin lyase activity. This Cyanophora paradoxa protein is Phycobiliprotein ApcE (apcE).